A 158-amino-acid chain; its full sequence is Ribosomal RNA large subunit methyltransferase H (158 aa).

Residues Leu-74, Gly-105, and 124–129 (LGPLTL) contribute to the S-adenosyl-L-methionine site.

The protein belongs to the RNA methyltransferase RlmH family. Homodimer.

The protein resides in the cytoplasm. It carries out the reaction pseudouridine(1915) in 23S rRNA + S-adenosyl-L-methionine = N(3)-methylpseudouridine(1915) in 23S rRNA + S-adenosyl-L-homocysteine + H(+). In terms of biological role, specifically methylates the pseudouridine at position 1915 (m3Psi1915) in 23S rRNA. In Xylella fastidiosa (strain Temecula1 / ATCC 700964), this protein is Ribosomal RNA large subunit methyltransferase H.